Here is a 1861-residue protein sequence, read N- to C-terminus: Protein TANC1 (1861 aa).

An N-acetylmethionine modification is found at M1. Disordered regions lie at residues 1 to 46 (MLKA…SSLP), 63 to 99 (SLPS…ESPR), 206 to 225 (KSPC…KDSG), 257 to 311 (QKGV…MPRP), and 439 to 486 (QIAS…ISAE). The span at 8–21 (KSREGGKGGKKEAG) shows a compositional bias: basic and acidic residues. Phosphoserine occurs at positions 63, 66, 67, 207, and 270. The segment covering 206–219 (KSPCETISSPSSTL) has biased composition (polar residues). The segment covering 440 to 455 (IASNSPGSSPKTSDPT) has biased composition (polar residues). The segment covering 461–480 (TPLLSPSSSTSASSTAKTPL) has biased composition (low complexity). Residue S465 is modified to Phosphoserine. ANK repeat units lie at residues 896–928 (EGLS…NVNY), 934–963 (NNAP…CLDG), 967–996 (NGMT…RVDH), 1000–1029 (KGQC…SPGP), 1040–1069 (ALQQ…EHEV), 1078–1107 (WGET…AVSR), 1111–1140 (RGVP…DVNL), 1144–1173 (QGRT…ALSS), 1177–1206 (EGLS…AIDQ), 1210–1239 (NGRT…VIEH), and 1243–1272 (SGMR…KLGN). TPR repeat units follow at residues 1289–1322 (LQKL…FPRE), 1336–1369 (VSLY…KPKS), and 1371–1403 (EAFY…CPTN). Low complexity predominate over residues 1421 to 1431 (QRSQQQKQQGP). 2 disordered regions span residues 1421-1485 (QRSQ…SVPS) and 1636-1696 (VAVD…KVQG). S1439 carries the post-translational modification Phosphoserine. Composition is skewed to low complexity over residues 1467–1485 (QEES…SVPS) and 1659–1689 (SLTS…SSFS). Phosphoserine is present on residues S1668, S1676, and S1677.

The protein belongs to the TANC family. Interacts probably directly with DLG1, DLG4, HOMER1. Interacts with DLGAP1, INA, CAMK2A, GRIN2B and GRIA1. Interacts with TNIK. Interacts with MINK1. In terms of processing, phosphorylated; by MINK1 and TNIK upon stimulation by RAP2A.

The protein localises to the postsynaptic density. In terms of biological role, may be a scaffold component in the postsynaptic density. The chain is Protein TANC1 (TANC1) from Homo sapiens (Human).